Consider the following 98-residue polypeptide: NADH-ubiquinone oxidoreductase chain 4L (98 aa).

Transmembrane regions (helical) follow at residues 1–21, 27–47, and 61–81; these read MIPT…GMLT, VASL…TALI, and IILL…LISI.

The protein belongs to the complex I subunit 4L family. Core subunit of respiratory chain NADH dehydrogenase (Complex I) which is composed of 45 different subunits.

It localises to the mitochondrion inner membrane. It catalyses the reaction a ubiquinone + NADH + 5 H(+)(in) = a ubiquinol + NAD(+) + 4 H(+)(out). In terms of biological role, core subunit of the mitochondrial membrane respiratory chain NADH dehydrogenase (Complex I) which catalyzes electron transfer from NADH through the respiratory chain, using ubiquinone as an electron acceptor. Part of the enzyme membrane arm which is embedded in the lipid bilayer and involved in proton translocation. In Macaca sylvanus (Barbary macaque), this protein is NADH-ubiquinone oxidoreductase chain 4L (MT-ND4L).